The following is a 74-amino-acid chain: MKAAISLIIFFAILFVVIEAISYEEGKELFQKERAECVGDGQRCADWAGPYCCSGYYCSCRSMPYCRCRSDSGK.

An N-terminal signal peptide occupies residues 1 to 20; sequence MKAAISLIIFFAILFVVIEA. Positions 21 to 34 are excised as a propeptide; it reads ISYEEGKELFQKER. Cystine bridges form between C37-C53, C44-C58, C52-C68, and C60-C66. A Serine amide modification is found at S72.

The protein belongs to the neurotoxin 07 (Beta/delta-agtx) family. 02 (aga-3) subfamily. As to expression, expressed by the venom gland.

It localises to the secreted. Functionally, insecticidal neurotoxin that induces an irreversible spastic paralysis when injected into insects. Modifies presynaptic voltage-gated sodium channels (Nav), causing them to open at the normal resting potential of the nerve. This leads to spontaneous release of neurotransmitter and repetitive action potentials in motor neurons. This chain is U3-agatoxin-Ao1b, found in Agelena orientalis (Funnel-web spider).